The sequence spans 104 residues: Fluoride-specific ion channel FluC 2 (104 aa).

Transmembrane regions (helical) follow at residues 22–42 (IGPY…LAAV), 48–68 (LVMA…STLA), and 82–102 (MLLG…WCGL). Na(+)-binding residues include Gly-59 and Ser-62.

The protein belongs to the fluoride channel Fluc/FEX (TC 1.A.43) family.

The protein resides in the cell membrane. The catalysed reaction is fluoride(in) = fluoride(out). Na(+) is not transported, but it plays an essential structural role and its presence is essential for fluoride channel function. Its function is as follows. Fluoride-specific ion channel. Important for reducing fluoride concentration in the cell, thus reducing its toxicity. This chain is Fluoride-specific ion channel FluC 2, found in Corynebacterium diphtheriae (strain ATCC 700971 / NCTC 13129 / Biotype gravis).